An 804-amino-acid polypeptide reads, in one-letter code: MMTRFACLHLFTMFLFTLLSGSSSAVITTESPLSMGQTLSSANEVYELGFFSPNNTQDQYVGIWFKDTIPRVVVWVANREKPVTDSTAYLAISSSGSLLLLNGKHGTVWSSGVTFSSSGCRAELSDSGNLKVIDNVSERALWQSFDHLGDTLLHTSSLTYNLATAEKRVLTSWKSYTDPSPGDFLGQITPQVPSQGFVMRGSTPYWRSGPWAKTRFTGIPFMDESYTGPFTLHQDVNGSGYLTYFQRDYKLSRITLTSEGSIKMFRDNGMGWELYYEAPKKLCDFYGACGPFGLCVMSPSPMCKCFRGFVPKSVEEWKRGNWTGGCVRHTELDCLGNSTGEDADDFHQIANIKPPDFYEFASSVNAEECHQRCVHNCSCLAFAYIKGIGCLVWNQDLMDAVQFSATGELLSIRLARSELDGNKRKKTIVASIVSLTLFMILGFTAFGVWRCRVEHIAHISKDAWKNDLKPQDVPGLDFFDMHTIQNATNNFSLSNKLGQGGFGSVYKGKLQDGKEIAVKRLSSSSGQGKEEFMNEIVLISKLQHRNLVRVLGCCIEEEEKLLIYEFMVNKSLDTFLFDSRKRLEIDWPKRFDIIQGIARGLLYLHHDSRLRVIHRDLKVSNILLDEKMNPKISDFGLARMYQGTEYQDNTRRVVGTLGYMSPEYAWTGMFSEKSDIYSFGVLMLEIISGEKISRFSYGVEGKTLIAYAWESWSEYRGIDLLDQDLADSCHPLEVGRCIQIGLLCVQHQPADRPNTLELLAMLTTTSDLPSPKQPTFAFHTRDDESLSNDLITVNGMTQSVILGR.

Positions 1–24 (MMTRFACLHLFTMFLFTLLSGSSS) are cleaved as a signal peptide. The Bulb-type lectin domain occupies 25–145 (AVITTESPLS…VSERALWQSF (121 aa)). Over 25–427 (AVITTESPLS…ELDGNKRKKT (403 aa)) the chain is Extracellular. N-linked (GlcNAc...) asparagine glycosylation is found at N54, N135, and N237. The 37-residue stretch at 279–315 (PKKLCDFYGACGPFGLCVMSPSPMCKCFRGFVPKSVE) folds into the EGF-like; atypical domain. Intrachain disulfides connect C283–C295 and C289–C303. Residues N321, N337, and N376 are each glycosylated (N-linked (GlcNAc...) asparagine). Positions 334–416 (CLGNSTGEDA…GELLSIRLAR (83 aa)) constitute a PAN domain. 2 disulfide bridges follow: C369–C390 and C373–C379. A helical membrane pass occupies residues 428 to 448 (IVASIVSLTLFMILGFTAFGV). Residues 449-804 (WRCRVEHIAH…GMTQSVILGR (356 aa)) are Cytoplasmic-facing. The Protein kinase domain maps to 491–776 (FSLSNKLGQG…DLPSPKQPTF (286 aa)). Residues 497 to 505 (LGQGGFGSV) and K519 each bind ATP. Phosphoserine is present on residues S525 and S540. The caM-binding stretch occupies residues 580 to 597 (RKRLEIDWPKRFDIIQGI). Catalysis depends on D616, which acts as the Proton acceptor. S620 and S633 each carry phosphoserine. At T650 the chain carries Phosphothreonine. Residues S693 and S787 each carry the phosphoserine modification.

It belongs to the protein kinase superfamily. Ser/Thr protein kinase family.

It localises to the cell membrane. The catalysed reaction is L-seryl-[protein] + ATP = O-phospho-L-seryl-[protein] + ADP + H(+). The enzyme catalyses L-threonyl-[protein] + ATP = O-phospho-L-threonyl-[protein] + ADP + H(+). The chain is G-type lectin S-receptor-like serine/threonine-protein kinase At1g61500 from Arabidopsis thaliana (Mouse-ear cress).